The chain runs to 158 residues: Glutathione peroxidase homolog BsaA (158 aa).

Cysteine 36 is an active-site residue.

It belongs to the glutathione peroxidase family.

The protein is Glutathione peroxidase homolog BsaA (bsaA) of Staphylococcus epidermidis (strain ATCC 12228 / FDA PCI 1200).